Reading from the N-terminus, the 1679-residue chain is MKEATELNEDMLEEAEHLALLEPEDDGTFFQVTNLLNIMDSESAKTDTTGPGLDMRKTLASVIITEKATTDPCVVMNALIRCLQMPEISTQRKMNIYNIMQEIIQQEGEMEEHCIQRLVAIASKQMRDITEAEDFETAEVASETLVALSRNHFSLVMYELQHHLKPLNLTDEFVIVTLAKLANGNVFEFMPYMGITLATIFTMLRLANEAKMRQVICSAMETFCETVQFYLRHLEDSLYPVMTEDQFAVKLFPMYRYFVTVWLRHQDLEVKLGVIKSLRPMLSLLLPNDDLREQVYDYIPLLLAEFQGTGHWPLFPSLLQVLRQILEASVTTNTPIPPMLLHPIFTELHVQVCSKAPAQQQFSSQNLMEIVHCFIALARSYPKELMKFFFSQVEMSKEAVRVGTLALIRAVVSADDPKINIKTIYLAIRVVKNTLSDTRSKVRMAILRIIGQLVLSGFQEKIKGWGLKYVSVQLTLSTYKLTNRRECFYQRDLEEKMVHKVTMDTVKIITSSISGMTNEFWVRLLCYIMETDYTEALTPICISLTNLAENQIHGKDTEAGIAGKSKHVDLPAPQKLLARLLVLMSSPYKGEGRGIAMLNLLRTLSQSIAPSMADMWEQEIPLLVQYLEEHTEFTWNQKTWEDMLIQFLRNSLKKTRGTSWSLRLSKELNNQIETFDSPSLEKGFLYRALGFTLGMGLEADRVEVLLLELLYKTDYSNDFDREGVILCFGLCARGQVKTVLNVLQDFEERIQESEQSWQIGAWRKDHPWRRETVKSALMVMYSCVSSYCHPQMLLTHVDSPITSKIIHHYSSSCQDISLKMAFMKSVVQVTNAIKSIQDPEDFQFAHKSALTGLIVVIIKAEPPDHLVSPVRSMAMDALSQLSTMKPFYSPEESTELMDISIHTVISLQPPGEDNESVKTLYANTMSSLKQLMEGLLQRQLDPKGLQDTVHLLEKWILSEKEWEREKAMALHLHLMQIYVQSIGVCIPLKLGQFGVLVGLIAPCTCDAHRRTRLASINVLSSLLDLHVSQTCSLWGTSKEQELQKCKEDLQDTDMNKISSASSRVAKVVCPEFNCDEVVSLIQKLCENIGAMDLQHDRAAVTWIGIFLQMRVKELEDKVAEILGAILVHLPVVDHPEVRRHLIEGILLLAHYHQETVLTSLLRQPLPMESHLTEVWLAVAENVPFARTMLHGLLGRLQSRFTAKINATSKADIWRLAAVDPLMTLCTIQLLMEKMDQDDKFPDLFPDLLYTFLLQLGSSHGPEAASPVLKTWRLVHTGPLPQEMTLQRCSRSRITIKSMQLLVKRINREPLEQALEEQSVWSLLENGGTFLEGVSLMARLCMQNMENYMQRLAELVLTGMGSEILSCCISSTAICVEFMSDPVLHQEKLLRPVVLMLEKGAGQDKDETLQVLSLRALGNMALGAPRKVKQYRKLLLEKCLGSLQGQVSSSAMAEGMEALTKVLAELREGDIGSSFEAISKQCRAFFDNESELLRLKAFVLFGKLTKVVGISKKHFFKGEVKRGWVSLLLHCQDPCPSVAQACVATMFQCVHFWGWKSLESSFGHSNDSINEQMTVFQTNMCSVLAQKKPAVLCGFLLETTVFMKNNLSRIRIAACNLAGIIMKQLSAHYLKKMDLVGLRNSLQDLQLDSDAGVRRAALETLKVLDSCNQHWLLASPRGLP.

HEAT repeat units follow at residues 68–91, 92–128, 190–229, 293–313, 314–350, 380–417, 422–459, 571–610, 614–654, 737–774, 848–887, 991–1028, 1219–1261, 1387–1425, and 1632–1669; these read ATTD…ISTQ, RKMN…QMRD, MPYM…TVQF, EQVY…GHWP, LFPS…ELHV, SYPK…ADDP, KTIY…SGFQ, PAPQ…SIAP, DMWE…SLKK, KTVL…ETVK, SALT…MKPF, GQFG…LHVS, DPLM…SHGP, KLLR…GAPR, and MDLV…CNQH.

This is Maestro heat-like repeat-containing protein family member 2A (Mroh2a) from Mus musculus (Mouse).